The primary structure comprises 446 residues: Probable glycine dehydrogenase (decarboxylating) subunit 1 (446 aa).

This sequence belongs to the GcvP family. N-terminal subunit subfamily. In terms of assembly, the glycine cleavage system is composed of four proteins: P, T, L and H. In this organism, the P 'protein' is a heterodimer of two subunits.

It catalyses the reaction N(6)-[(R)-lipoyl]-L-lysyl-[glycine-cleavage complex H protein] + glycine + H(+) = N(6)-[(R)-S(8)-aminomethyldihydrolipoyl]-L-lysyl-[glycine-cleavage complex H protein] + CO2. In terms of biological role, the glycine cleavage system catalyzes the degradation of glycine. The P protein binds the alpha-amino group of glycine through its pyridoxal phosphate cofactor; CO(2) is released and the remaining methylamine moiety is then transferred to the lipoamide cofactor of the H protein. This is Probable glycine dehydrogenase (decarboxylating) subunit 1 from Protochlamydia amoebophila (strain UWE25).